The following is a 677-amino-acid chain: Methionine--tRNA ligase (677 aa).

The 'HIGH' region signature appears at 15–25 (PYANGSIHLGH). Residues C146, C149, C159, and C162 each contribute to the Zn(2+) site. The 'KMSKS' region motif lies at 333–337 (KMSKS). K336 is an ATP binding site. Residues 575-677 (DFAKVDLRVA…AGAKPGHQVK (103 aa)) enclose the tRNA-binding domain.

Belongs to the class-I aminoacyl-tRNA synthetase family. MetG type 1 subfamily. As to quaternary structure, homodimer. Zn(2+) serves as cofactor.

The protein resides in the cytoplasm. The catalysed reaction is tRNA(Met) + L-methionine + ATP = L-methionyl-tRNA(Met) + AMP + diphosphate. Functionally, is required not only for elongation of protein synthesis but also for the initiation of all mRNA translation through initiator tRNA(fMet) aminoacylation. The protein is Methionine--tRNA ligase of Shigella dysenteriae serotype 1 (strain Sd197).